A 262-amino-acid chain; its full sequence is DNA repair protein RecO (262 aa).

The protein belongs to the RecO family.

Functionally, involved in DNA repair and RecF pathway recombination. The sequence is that of DNA repair protein RecO from Enterococcus faecalis (strain ATCC 700802 / V583).